We begin with the raw amino-acid sequence, 390 residues long: Putative 8-amino-7-oxononanoate synthase (390 aa).

Arg-20 provides a ligand contact to substrate. A pyridoxal 5'-phosphate-binding site is contributed by 107-108 (GY). His-132 serves as a coordination point for substrate. Pyridoxal 5'-phosphate is bound by residues Ser-181, 206–209 (DDAH), and 237–240 (TLGK). An N6-(pyridoxal phosphate)lysine modification is found at Lys-240. Position 356 (Thr-356) interacts with substrate.

This sequence belongs to the class-II pyridoxal-phosphate-dependent aminotransferase family. BioF subfamily. As to quaternary structure, homodimer. It depends on pyridoxal 5'-phosphate as a cofactor.

It catalyses the reaction 6-carboxyhexanoyl-[ACP] + L-alanine + H(+) = (8S)-8-amino-7-oxononanoate + holo-[ACP] + CO2. The protein operates within cofactor biosynthesis; biotin biosynthesis. In terms of biological role, catalyzes the decarboxylative condensation of pimeloyl-[acyl-carrier protein] and L-alanine to produce 8-amino-7-oxononanoate (AON), [acyl-carrier protein], and carbon dioxide. The protein is Putative 8-amino-7-oxononanoate synthase (bioF) of Syntrophotalea carbinolica (strain DSM 2380 / NBRC 103641 / GraBd1) (Pelobacter carbinolicus).